A 61-amino-acid polypeptide reads, in one-letter code: uncharacterized protein (61 aa).

2 helical membrane passes run 7–24 (FNVF…YKLF) and 29–48 (VSTT…IVGL).

Its subcellular location is the cell membrane. This is an uncharacterized protein from Bacillus subtilis (strain 168).